We begin with the raw amino-acid sequence, 872 residues long: Alanine--tRNA ligase (872 aa).

4 residues coordinate Zn(2+): histidine 567, histidine 571, cysteine 669, and histidine 673.

It belongs to the class-II aminoacyl-tRNA synthetase family. Requires Zn(2+) as cofactor.

The protein resides in the cytoplasm. The catalysed reaction is tRNA(Ala) + L-alanine + ATP = L-alanyl-tRNA(Ala) + AMP + diphosphate. Functionally, catalyzes the attachment of alanine to tRNA(Ala) in a two-step reaction: alanine is first activated by ATP to form Ala-AMP and then transferred to the acceptor end of tRNA(Ala). Also edits incorrectly charged Ser-tRNA(Ala) and Gly-tRNA(Ala) via its editing domain. This Streptococcus agalactiae serotype V (strain ATCC BAA-611 / 2603 V/R) protein is Alanine--tRNA ligase.